Reading from the N-terminus, the 660-residue chain is Histone deacetylase 5 (660 aa).

A2 is modified (N-acetylalanine). The tract at residues 26-349 (KVGLIYDETM…SLACVQVLLE (324 aa)) is histone deacetylase. H158 acts as the Proton donor/acceptor in catalysis. D198, H200, and D291 together coordinate Zn(2+).

Belongs to the histone deacetylase family. HD type 2 subfamily. In terms of assembly, interacts with HDA6. Zn(2+) is required as a cofactor. As to expression, expressed in stems, leaves, flowers, siliques and mature seeds.

Its subcellular location is the nucleus. It localises to the cytoplasm. The catalysed reaction is N(6)-acetyl-L-lysyl-[histone] + H2O = L-lysyl-[histone] + acetate. Its activity is regulated as follows. Inhibited by trichostatin A (TSA), a well-known histone deacetylase inhibitor. Its function is as follows. Responsible for the deacetylation of lysine residues on the N-terminal part of the core histones (H2A, H2B, H3 and H4). Histone deacetylation gives a tag for epigenetic repression and plays an important role in transcriptional regulation, cell cycle progression and developmental events. Histone deacetylases act via the formation of large multiprotein complexes. Involved in the regulation of flowering time by repressing FLC and AGL27/MAF1 expression. Forms a histone deacetylase complex with HDA6, FLD and MSI4/FVE that represses FLC gene expression to control flowering time. Unlike its tandem duplication HDA18, HDA5 does not seem to be required for the cellular patterning in the root epidermis. This is Histone deacetylase 5 from Arabidopsis thaliana (Mouse-ear cress).